A 72-amino-acid polypeptide reads, in one-letter code: Neuropeptide IMFamide (72 aa).

The N-terminal stretch at 1–24 is a signal peptide; the sequence is MMRFTIGVVCLVAVLLSLAEVSEA. The residue at position 36 (phenylalanine 36) is a Phenylalanine amide. Residues 40–72 constitute a propeptide that is removed on maturation; that stretch reads GPTEYDQRGKTFTALCEIATEACQAWFPSTENK.

Expressed in corpora cardiaca (CC), corpora allata (CA), antennal lobe (AL) and gnathal ganglion (GNG) (at protein level). Expression detected in only a few animals (at protein level).

The protein resides in the secreted. The sequence is that of Neuropeptide IMFamide from Agrotis ipsilon (Black cutworm moth).